The chain runs to 109 residues: Small ribosomal subunit protein bS20 (109 aa).

The protein belongs to the bacterial ribosomal protein bS20 family.

Its function is as follows. Binds directly to 16S ribosomal RNA. The protein is Small ribosomal subunit protein bS20 of Synechococcus sp. (strain JA-2-3B'a(2-13)) (Cyanobacteria bacterium Yellowstone B-Prime).